Reading from the N-terminus, the 512-residue chain is Maturase K (512 aa).

Belongs to the intron maturase 2 family. MatK subfamily.

It localises to the plastid. The protein resides in the chloroplast. Functionally, usually encoded in the trnK tRNA gene intron. Probably assists in splicing its own and other chloroplast group II introns. The protein is Maturase K of Oenothera biennis (German evening primrose).